The chain runs to 197 residues: Isopentenyl-diphosphate Delta-isomerase (197 aa).

Mn(2+)-binding residues include His-41 and His-48. The Nudix hydrolase domain maps to 46 to 183 (QLHRAFSVFL…SWFMTVLDAA (138 aa)). The active site involves Cys-83. Mg(2+) is bound at residue Cys-83. His-85 contacts Mn(2+). Glu-103 contributes to the Mg(2+) binding site. Positions 130 and 132 each coordinate Mn(2+). Glu-132 is an active-site residue.

Belongs to the IPP isomerase type 1 family. The cofactor is Mg(2+). It depends on Mn(2+) as a cofactor.

It localises to the cytoplasm. The catalysed reaction is isopentenyl diphosphate = dimethylallyl diphosphate. Its pathway is isoprenoid biosynthesis; dimethylallyl diphosphate biosynthesis; dimethylallyl diphosphate from isopentenyl diphosphate: step 1/1. In terms of biological role, catalyzes the 1,3-allylic rearrangement of the homoallylic substrate isopentenyl (IPP) to its highly electrophilic allylic isomer, dimethylallyl diphosphate (DMAPP). This Streptomyces avermitilis (strain ATCC 31267 / DSM 46492 / JCM 5070 / NBRC 14893 / NCIMB 12804 / NRRL 8165 / MA-4680) protein is Isopentenyl-diphosphate Delta-isomerase.